Here is a 288-residue protein sequence, read N- to C-terminus: Phenazine biosynthesis-like domain-containing protein (288 aa).

Residue E46 is part of the active site.

This sequence belongs to the PhzF family. In terms of assembly, interacts with UNRIP/MAWD.

The sequence is that of Phenazine biosynthesis-like domain-containing protein (PBLD) from Pongo abelii (Sumatran orangutan).